A 610-amino-acid polypeptide reads, in one-letter code: Mitochondrial import receptor subunit TOM70 (610 aa).

Position 2 is an N-acetylalanine (Ala2). Residues 2–41 (AASKPVEAAMAAAAAPASGNGVGSSGGTAAPGSGAGTLPR) are Mitochondrial intermembrane-facing. Residues 42 to 62 (WHVALAIGAPLLLGAGAMYLW) traverse the membrane as a helical segment. The Cytoplasmic segment spans residues 63–610 (SRRRRRREAG…KKYGLKPPTL (548 aa)). Residues 69 to 109 (REAGGRGDASGLKRNSERKTPEGRASPALGSGPDGSGDSLE) form a disordered region. Arg74 carries the post-translational modification Omega-N-methylarginine. A compositionally biased stretch (low complexity) spans 93–108 (ASPALGSGPDGSGDSL). 5 positions are modified to phosphoserine: Ser94, Ser99, Ser104, Ser107, and Ser112. 2 TPR repeats span residues 116 to 149 (AQAAKNKGNKYFKAGKYEQAIQCYTEAISLCPTE) and 155 to 188 (STFYQNRAAAFEQLQKWKEVAQDCTKAVELNPKY). Lys187 carries the post-translational modification N6-acetyllysine. Residue Lys277 forms a Glycyl lysine isopeptide (Lys-Gly) (interchain with G-Cter in SUMO2) linkage. TPR repeat units lie at residues 296-329 (ENSGYLKAKQYMEEENYDKIISECSKEIDAQGKY), 331-364 (AEALLLRATFYLLIGSANAAKPDLDKVISLKEAN), 369-402 (ANALIKRGTMCMQQQQPMLSTQDFNMAAEIDPMN), 403-436 (SDVYHHRGQLKILLDLVEEAVADFDACIRLRPKF), 444-477 (CFALYRQAYTANNSSQVQAAMKGFEEVIKKFPRC), 478-511 (AEGYALYAQALTDQQQFGKADEMYDKCIDLEPDN), 513-546 (TTYVHKGLLQLQWKQDLDKGLELISKAIEIDNKC), and 547-580 (DFAYETMGTIEVQRGNMEKAIDMFNKAINLAKSE).

It belongs to the Tom70 family. Forms part of the preprotein translocase complex of the outer mitochondrial membrane (TOM complex) which consists of at least 7 different proteins (TOMM5, TOMM6, TOMM7, TOMM20, TOMM22, TOMM40 and TOMM70). Interacts with CAPN8. Interacts with TRADD, TRAF6 and STING. Interacts with MAVS. Interacts with HSPA8 and HSP90AA1; both interactions are required for preprotein mitochondrial import. The interaction with HSP90AA1 is direct and mediates the association of TOMM70 with IRF3 and TBK1. Upon mitochondrial depolarization, interacts with PINK1; the interaction is required for PINK1-TOM-TIM23 supercomplex formation which is critical for PINK1 stabilization at the outer mitochondrial membrane, kinase activation and downstream mitophagy.

It is found in the mitochondrion outer membrane. Acts as a receptor of the preprotein translocase complex of the outer mitochondrial membrane (TOM complex). Recognizes and mediates the translocation of mitochondrial preproteins from the cytosol into the mitochondria in a chaperone dependent manner. Mediates TBK1 and IRF3 activation induced by MAVS in response to Sendai virus infection and promotes host antiviral responses during virus infection. The polypeptide is Mitochondrial import receptor subunit TOM70 (Rattus norvegicus (Rat)).